The primary structure comprises 315 residues: Probable cytochrome c oxidase subunit 2 (315 aa).

Positions 6 to 53 (RHLSKPAYREEFKGDTSPRTAAYISNRADASLGSTYKLPLEAKFWKMS) constitute an RPE1 insert domain. Transmembrane regions (helical) follow at residues 41–61 (YKLPLEAKFWKMSIALICFLI), 96–116 (LLYISTAIVLFVAGLLGFVCI), and 133–153 (VLIEIIWTVIPIIILVIIAVP). His235, Cys270, Cys274, and His278 together coordinate Cu cation.

It belongs to the cytochrome c oxidase subunit 2 family. It depends on Cu cation as a cofactor. Heme is required as a cofactor.

It is found in the cell membrane. The catalysed reaction is 4 Fe(II)-[cytochrome c] + O2 + 8 H(+)(in) = 4 Fe(III)-[cytochrome c] + 2 H2O + 4 H(+)(out). Functionally, subunits I and II form the functional core of the enzyme complex. Electrons originating in cytochrome c are transferred via heme a and Cu(A) to the binuclear center formed by heme a3 and Cu(B). This chain is Probable cytochrome c oxidase subunit 2 (ctaC), found in Rickettsia felis (strain ATCC VR-1525 / URRWXCal2) (Rickettsia azadi).